The following is a 379-amino-acid chain: Putative glutamate--cysteine ligase 2 (379 aa).

It belongs to the glutamate--cysteine ligase type 2 family. YbdK subfamily.

The catalysed reaction is L-cysteine + L-glutamate + ATP = gamma-L-glutamyl-L-cysteine + ADP + phosphate + H(+). Its function is as follows. ATP-dependent carboxylate-amine ligase which exhibits weak glutamate--cysteine ligase activity. This is Putative glutamate--cysteine ligase 2 from Roseiflexus castenholzii (strain DSM 13941 / HLO8).